The chain runs to 626 residues: Probable potassium transport system protein Kup 3 (626 aa).

Transmembrane regions (helical) follow at residues L10–L30, V51–V71, V107–I127, P141–F161, F173–V193, L216–Y236, W251–L271, L293–F313, I341–F361, Y371–V391, A401–V421, and I423–T443.

This sequence belongs to the HAK/KUP transporter (TC 2.A.72) family.

It is found in the cell inner membrane. It catalyses the reaction K(+)(in) + H(+)(in) = K(+)(out) + H(+)(out). In terms of biological role, transport of potassium into the cell. Likely operates as a K(+):H(+) symporter. The chain is Probable potassium transport system protein Kup 3 from Dechloromonas aromatica (strain RCB).